The following is a 96-amino-acid chain: uncharacterized protein (96 aa).

The N-terminal stretch at Met-1–Ala-21 is a signal peptide.

This is an uncharacterized protein from Archaeoglobus fulgidus (strain ATCC 49558 / DSM 4304 / JCM 9628 / NBRC 100126 / VC-16).